The following is a 287-amino-acid chain: Inhibitory synaptic factor 1 (287 aa).

The tract at residues 1-22 (MSQSRAPAREPSETPSQREQIR) is disordered. Residues 25–58 (MKMVIQQLEGILKELKDVAHELREVVGQIDKLTS) are a coiled coil. 2 disordered regions span residues 113–174 (RRSA…GTRE) and 189–287 (CDDD…NKDL). The segment covering 153-167 (EEASSSTHSQSQKTS) has biased composition (low complexity). The span at 189 to 209 (CDDDEDEDEDEDGRDEEEDKL) shows a compositional bias: acidic residues. The span at 259–274 (RNSSTQTVSDKSTQTL) shows a compositional bias: polar residues.

This sequence belongs to the INSYN1 family.

It localises to the postsynaptic density. Its function is as follows. May be a component of the protein machinery at the inhibitory synapses, probably acting as a scaffold. The sequence is that of Inhibitory synaptic factor 1 from Danio rerio (Zebrafish).